The primary structure comprises 559 residues: Cellulose biosynthesis protein BcsG (559 aa).

The next 4 helical transmembrane spans lie at L34 to L54, H68 to P88, F113 to S133, and T139 to F159.

The protein localises to the cell membrane. Its function is as follows. Required for cellulose biosynthesis. In Salmonella typhimurium (strain LT2 / SGSC1412 / ATCC 700720), this protein is Cellulose biosynthesis protein BcsG (bcsG).